Reading from the N-terminus, the 218-residue chain is Tubulin polymerization-promoting protein (218 aa).

The interval 1–45 (MADSKAKPTKAANKTPPKSPGDPAKAAKRLSLESEGANEGAAAAP) is disordered. The interval 2–115 (ADSKAKPTKA…SCRTITFEQF (114 aa)) is mediates interaction with LIMK1. Phosphothreonine is present on T15. A phosphoserine mark is found at S19, S31, and S34. The segment covering 33 to 45 (ESEGANEGAAAAP) has biased composition (low complexity). Positions 60, 71, 79, and 82 each coordinate Zn(2+). T91 is subject to Phosphothreonine. Residue S106 is modified to Phosphoserine. O-linked (GlcNAc) serine glycosylation occurs at S151. Phosphoserine is present on residues S158 and S159. Residues 165-192 (LTDTSKFTGSHKERFDQSGKGKGKAGRV) are disordered. The segment covering 174–183 (SHKERFDQSG) has biased composition (basic and acidic residues).

It belongs to the TPPP family. In terms of assembly, homodimer. Binds tubulin; binding is inhibited by GTP. Interacts with MAPK1. Interacts with GAPDH; the interaction is direct. Interacts with LIMK1 (via the PDZ domain); the interaction is direct. Interacts with LIMK2. Interacts with HDAC6; thereby inhibiting the tubulin deacetylase activity of HDAC6. Interacts with aggregated SNCA; may have a pro-aggregatory role in synucleinopathies. Interacts with DYNLL1. Interacts (via C-terminus) with S100A2, S100A6 and S100B; these interactions inhibit TPPP dimerization. It depends on Mg(2+) as a cofactor. Phosphorylated by LIMK1 on serine residues; phosphorylation may alter the tubulin polymerization activity. Phosphorylation by LIMK2, but not LIMK1, regulates astral microtubule organization at early stage of mitosis. Phosphorylation by ROCK1 at Ser-31, Ser-106 and Ser-158 inhibits interaction with HDAC6, resulting in decreased acetylation of tubulin, increased cell motility and entry into S-phase. Phosphorylation by CDK1 inhibits the microtubule polymerizing activity. In terms of processing, degraded by the proteasome; zinc-binding inhibits degradation by the proteasome. As to expression, predominantly expressed in mature oligodendrocytes.

It localises to the golgi outpost. Its subcellular location is the cytoplasm. The protein localises to the cytoskeleton. The protein resides in the microtubule organizing center. It is found in the nucleus. It localises to the spindle. The enzyme catalyses GTP + H2O = GDP + phosphate + H(+). Regulator of microtubule dynamics that plays a key role in myelination by promoting elongation of the myelin sheath. Acts as a microtubule nucleation factor in oligodendrocytes: specifically localizes to the postsynaptic Golgi apparatus region, also named Golgi outpost, and promotes microtubule nucleation, an important step for elongation of the myelin sheath. Required for both uniform polarized growth of distal microtubules as well as directing the branching of proximal processes. Shows magnesium-dependent GTPase activity; the role of the GTPase activity is unclear. In addition to microtubule nucleation activity, also involved in microtubule bundling and stabilization of existing microtubules, thereby maintaining the integrity of the microtubule network. Regulates microtubule dynamics by promoting tubulin acetylation: acts by inhibiting the tubulin deacetylase activity of HDAC6. Also regulates cell migration: phosphorylation by ROCK1 inhibits interaction with HDAC6, resulting in decreased acetylation of tubulin and increased cell motility. Plays a role in cell proliferation by regulating the G1/S-phase transition. Involved in astral microtubule organization and mitotic spindle orientation during early stage of mitosis; this process is regulated by phosphorylation by LIMK2. This Rattus norvegicus (Rat) protein is Tubulin polymerization-promoting protein.